We begin with the raw amino-acid sequence, 101 residues long: MAERLSEDARKAAVKALSGWSEVAGREAIARVFTFRDFNEAFGFMARVALVAEKNDHHPEWRNVYKTVEVVLATHDAGGVTERDIRLAEAMNAIARQFGVA.

It belongs to the pterin-4-alpha-carbinolamine dehydratase family.

It catalyses the reaction (4aS,6R)-4a-hydroxy-L-erythro-5,6,7,8-tetrahydrobiopterin = (6R)-L-erythro-6,7-dihydrobiopterin + H2O. The chain is Putative pterin-4-alpha-carbinolamine dehydratase from Nitrobacter hamburgensis (strain DSM 10229 / NCIMB 13809 / X14).